A 240-amino-acid polypeptide reads, in one-letter code: tRNA1(Val) (adenine(37)-N6)-methyltransferase (240 aa).

It belongs to the methyltransferase superfamily. tRNA (adenine-N(6)-)-methyltransferase family.

It is found in the cytoplasm. The catalysed reaction is adenosine(37) in tRNA1(Val) + S-adenosyl-L-methionine = N(6)-methyladenosine(37) in tRNA1(Val) + S-adenosyl-L-homocysteine + H(+). Functionally, specifically methylates the adenine in position 37 of tRNA(1)(Val) (anticodon cmo5UAC). The sequence is that of tRNA1(Val) (adenine(37)-N6)-methyltransferase from Dyadobacter fermentans (strain ATCC 700827 / DSM 18053 / CIP 107007 / KCTC 52180 / NS114).